The following is a 414-amino-acid chain: Putative transporter YoaB (414 aa).

Topologically, residues 1-11 (MLDKIGIPKRL) are cytoplasmic. Residues 12 to 32 (AWGFLGVVLFMMGDGLEQGWL) traverse the membrane as a helical segment. The Extracellular portion of the chain corresponds to 33–47 (SPFLIENGLTVQQSA). A helical membrane pass occupies residues 48-68 (SIFSIYGIALAIASWFSGVCL). Over 69–75 (EAFGAKR) the chain is Cytoplasmic. Residues 76 to 96 (TMFMGLLFYVIGTAAFIVFGF) traverse the membrane as a helical segment. Residues 97–107 (EQLNLPVMYVT) are Extracellular-facing. The chain crosses the membrane as a helical span at residues 108-128 (YFVKGLGYPLFAYSFLTWVIY). At 129-136 (RTPQSKLS) the chain is on the cytoplasmic side. The chain crosses the membrane as a helical span at residues 137–157 (TAVGWFWIAYCLGMFVFGAWY). The Extracellular segment spans residues 158 to 167 (SSYAIKAFGY). The helical transmembrane segment at 168–188 (LNTLWSSIFWVCLGAFFALFI) threads the bilayer. Residues 189 to 219 (NKDRFEKKKRKRSETAEELLKGVTILFTNPR) are Cytoplasmic-facing. A helical transmembrane segment spans residues 220-240 (VLTGGIIRIINSIGTYGFPVF). Topologically, residues 241 to 255 (LPMHMAQHGISTNVW) are extracellular. The chain crosses the membrane as a helical span at residues 256–276 (LQIWGTIFLGNIVFNLIFGIV). Over 277–286 (GDKFGWKNTV) the chain is Cytoplasmic. A helical membrane pass occupies residues 287–307 (IWFGGVGCGIFTVLLYYAPVF). Over 308 to 316 (SGGSLAVVS) the chain is Extracellular. A helical transmembrane segment spans residues 317 to 337 (VIGFIWGGLLAGYVPIGAIVP). The Cytoplasmic portion of the chain corresponds to 338-343 (TVAGKD). Residues 344–364 (KGAAMSVLNLAAGLSAFVGPA) traverse the membrane as a helical segment. Over 365 to 375 (LAWLFIGLVGA) the chain is Extracellular. A helical membrane pass occupies residues 376 to 398 (QGVVWIFAALYLASAVLTKCIHI). The Cytoplasmic portion of the chain corresponds to 399 to 414 (PEEKAVKEETSPQYAS).

This sequence belongs to the major facilitator superfamily. Sugar transporter (TC 2.A.1.1) family. CsbX subfamily.

It localises to the cell membrane. This Bacillus subtilis (strain 168) protein is Putative transporter YoaB (yoaB).